The chain runs to 431 residues: Trigger factor (431 aa).

The 85-residue stretch at 161-245 (TDIVIGDVQK…VKEIKRMELP (85 aa)) folds into the PPIase FKBP-type domain.

It belongs to the FKBP-type PPIase family. Tig subfamily.

It localises to the cytoplasm. The enzyme catalyses [protein]-peptidylproline (omega=180) = [protein]-peptidylproline (omega=0). Functionally, involved in protein export. Acts as a chaperone by maintaining the newly synthesized protein in an open conformation. Functions as a peptidyl-prolyl cis-trans isomerase. The chain is Trigger factor from Chloroherpeton thalassium (strain ATCC 35110 / GB-78).